Here is a 302-residue protein sequence, read N- to C-terminus: Sulfate adenylyltransferase subunit 2 (302 aa).

Belongs to the PAPS reductase family. CysD subfamily. Heterodimer composed of CysD, the smaller subunit, and CysN.

It catalyses the reaction sulfate + ATP + H(+) = adenosine 5'-phosphosulfate + diphosphate. The protein operates within sulfur metabolism; hydrogen sulfide biosynthesis; sulfite from sulfate: step 1/3. With CysN forms the ATP sulfurylase (ATPS) that catalyzes the adenylation of sulfate producing adenosine 5'-phosphosulfate (APS) and diphosphate, the first enzymatic step in sulfur assimilation pathway. APS synthesis involves the formation of a high-energy phosphoric-sulfuric acid anhydride bond driven by GTP hydrolysis by CysN coupled to ATP hydrolysis by CysD. The polypeptide is Sulfate adenylyltransferase subunit 2 (Escherichia coli O157:H7 (strain EC4115 / EHEC)).